The primary structure comprises 307 residues: Follistatin-related protein 1 (307 aa).

Residues 1 to 19 form the signal peptide; sequence MMWRRWLALALVAVAWVHA. In terms of domain architecture, Follistatin-like spans 29-52; it reads ICANVFCGAGRECAVTEKGEPTCL. 5 disulfide bridges follow: cysteine 30–cysteine 41, cysteine 35–cysteine 51, cysteine 53–cysteine 83, cysteine 57–cysteine 76, and cysteine 65–cysteine 97. The 53-residue stretch at 47–99 folds into the Kazal-like domain; sequence GEPTCLCIEQCKPHKRPVCGSNGKTYLNHCELHRDACLTGSKIQVDYDGHCKE. N-linked (GlcNAc...) asparagine glycosylation occurs at asparagine 143. The 35-residue stretch at 143–177 folds into the EF-hand 1 domain; that stretch reads NYSEILDKYFKNFDNGDSRLDSSEFLKFVEQNETA. Residue serine 164 is modified to Phosphoserine. Residues asparagine 174 and asparagine 179 are each glycosylated (N-linked (GlcNAc...) asparagine). One can recognise an EF-hand 2 domain in the interval 192–227; that stretch reads LRGLCVDALIELSDENADWKLSFQEFLKCLNPSFNP. The VWFC domain occupies 232–286; the sequence is CALEDETYADGAETEVDCNRCVCACGNWVCTAMTCDGKNQKGAQTQAEEEMTRYV.

Homodimer. Interacts with SCN10A. Interacts with DIP2A; DIP2A may act as a cell surface receptor for FSTL1. Interacts with BMP4. Interacts with CD14; this interaction promotes TL4-mediated signaling cascade.

The protein localises to the secreted. In terms of biological role, secreted glycoprotein that is involved in various physiological processes, such as angiogenesis, regulation of the immune response, cell proliferation and differentiation. Plays a role in the development of the central nervous system, skeletal system, lungs, and ureter. Promotes endothelial cell survival, migration and differentiation into network structures in an AKT-dependent manner. Also promotes survival of cardiac myocytes. Initiates various signaling cascades by activating different receptors on the cell surface such as DIP2A, TLR4 or BMP receptors. This Bos taurus (Bovine) protein is Follistatin-related protein 1 (FSTL1).